The following is a 276-amino-acid chain: Large ribosomal subunit protein uL2 (276 aa).

The interval Gly-223 to Lys-276 is disordered. Residues Asp-230–Ala-240 show a composition bias toward basic and acidic residues. Residues Leu-257–Lys-276 are compositionally biased toward basic residues.

This sequence belongs to the universal ribosomal protein uL2 family. Part of the 50S ribosomal subunit. Forms a bridge to the 30S subunit in the 70S ribosome.

One of the primary rRNA binding proteins. Required for association of the 30S and 50S subunits to form the 70S ribosome, for tRNA binding and peptide bond formation. It has been suggested to have peptidyltransferase activity; this is somewhat controversial. Makes several contacts with the 16S rRNA in the 70S ribosome. This Thermus thermophilus (strain ATCC BAA-163 / DSM 7039 / HB27) protein is Large ribosomal subunit protein uL2.